Reading from the N-terminus, the 158-residue chain is uncharacterized protein (158 aa).

One can recognise an HTH asnC-type domain in the interval 12–73; it reads LDEIDRAILR…LINPFKAGYE (62 aa). The H-T-H motif DNA-binding region spans 31–50; that stretch reads YSEISRRINVPESTVRARVN.

This is an uncharacterized protein from Pyrococcus horikoshii (strain ATCC 700860 / DSM 12428 / JCM 9974 / NBRC 100139 / OT-3).